A 173-amino-acid chain; its full sequence is Co-chaperone protein HscB homolog (173 aa).

The region spanning 5–77 (CHFAQFDLQP…PRRALYLLTL (73 aa)) is the J domain.

Belongs to the HscB family. Interacts with HscA and stimulates its ATPase activity.

Co-chaperone involved in the maturation of iron-sulfur cluster-containing proteins. Seems to help targeting proteins to be folded toward HscA. This is Co-chaperone protein HscB homolog from Pseudomonas paraeruginosa (strain DSM 24068 / PA7) (Pseudomonas aeruginosa (strain PA7)).